Reading from the N-terminus, the 277-residue chain is Large ribosomal subunit protein uL2 (277 aa).

2 disordered regions span residues 28–55 and 207–277; these read EPEK…RHRG and KAGR…RTQG. 3 stretches are compositionally biased toward basic residues: residues 34 to 43, 209 to 220, and 255 to 265; these read THHKHSKQGR, GRTRHRGQRPHV, and LGRKTRNKKKR.

It belongs to the universal ribosomal protein uL2 family. Part of the 50S ribosomal subunit. Forms a bridge to the 30S subunit in the 70S ribosome.

Functionally, one of the primary rRNA binding proteins. Required for association of the 30S and 50S subunits to form the 70S ribosome, for tRNA binding and peptide bond formation. It has been suggested to have peptidyltransferase activity; this is somewhat controversial. Makes several contacts with the 16S rRNA in the 70S ribosome. This chain is Large ribosomal subunit protein uL2, found in Microcystis aeruginosa (strain NIES-843 / IAM M-2473).